Consider the following 438-residue polypeptide: Gamma-glutamyl phosphate reductase (438 aa).

The protein belongs to the gamma-glutamyl phosphate reductase family.

It is found in the cytoplasm. The enzyme catalyses L-glutamate 5-semialdehyde + phosphate + NADP(+) = L-glutamyl 5-phosphate + NADPH + H(+). The protein operates within amino-acid biosynthesis; L-proline biosynthesis; L-glutamate 5-semialdehyde from L-glutamate: step 2/2. Functionally, catalyzes the NADPH-dependent reduction of L-glutamate 5-phosphate into L-glutamate 5-semialdehyde and phosphate. The product spontaneously undergoes cyclization to form 1-pyrroline-5-carboxylate. The sequence is that of Gamma-glutamyl phosphate reductase from Prochlorococcus marinus (strain MIT 9303).